We begin with the raw amino-acid sequence, 130 residues long: Small ribosomal subunit protein uS9 (130 aa).

Belongs to the universal ribosomal protein uS9 family.

The protein is Small ribosomal subunit protein uS9 of Marinobacter nauticus (strain ATCC 700491 / DSM 11845 / VT8) (Marinobacter aquaeolei).